Here is a 344-residue protein sequence, read N- to C-terminus: Phosphate acyltransferase (344 aa).

Belongs to the PlsX family. As to quaternary structure, homodimer. Probably interacts with PlsY.

The protein resides in the cytoplasm. The catalysed reaction is a fatty acyl-[ACP] + phosphate = an acyl phosphate + holo-[ACP]. It functions in the pathway lipid metabolism; phospholipid metabolism. Catalyzes the reversible formation of acyl-phosphate (acyl-PO(4)) from acyl-[acyl-carrier-protein] (acyl-ACP). This enzyme utilizes acyl-ACP as fatty acyl donor, but not acyl-CoA. The polypeptide is Phosphate acyltransferase (Thermosynechococcus vestitus (strain NIES-2133 / IAM M-273 / BP-1)).